Reading from the N-terminus, the 342-residue chain is Farnesyl pyrophosphate synthase 2 (342 aa).

K48, R51, and Q86 together coordinate isopentenyl diphosphate. Mg(2+) is bound by residues D93 and D97. R102 contributes to the dimethylallyl diphosphate binding site. An isopentenyl diphosphate-binding site is contributed by R103. 5 residues coordinate dimethylallyl diphosphate: K190, T191, Q229, K246, and K255.

It belongs to the FPP/GGPP synthase family. It depends on Mg(2+) as a cofactor.

It is found in the cytoplasm. It carries out the reaction isopentenyl diphosphate + dimethylallyl diphosphate = (2E)-geranyl diphosphate + diphosphate. The catalysed reaction is isopentenyl diphosphate + (2E)-geranyl diphosphate = (2E,6E)-farnesyl diphosphate + diphosphate. Its pathway is isoprenoid biosynthesis; farnesyl diphosphate biosynthesis; farnesyl diphosphate from geranyl diphosphate and isopentenyl diphosphate: step 1/1. The protein operates within isoprenoid biosynthesis; geranyl diphosphate biosynthesis; geranyl diphosphate from dimethylallyl diphosphate and isopentenyl diphosphate: step 1/1. Functionally, catalyzes the sequential condensation of isopentenyl pyrophosphate with the allylic pyrophosphates, dimethylallyl pyrophosphate, and then with the resultant geranylpyrophosphate to the ultimate product farnesyl pyrophosphate. The polypeptide is Farnesyl pyrophosphate synthase 2 (FPS2) (Parthenium argentatum (Guayule rubber plant)).